The following is a 458-amino-acid chain: Exodeoxyribonuclease 7 large subunit (458 aa).

This sequence belongs to the XseA family. As to quaternary structure, heterooligomer composed of large and small subunits.

The protein localises to the cytoplasm. The catalysed reaction is Exonucleolytic cleavage in either 5'- to 3'- or 3'- to 5'-direction to yield nucleoside 5'-phosphates.. Its function is as follows. Bidirectionally degrades single-stranded DNA into large acid-insoluble oligonucleotides, which are then degraded further into small acid-soluble oligonucleotides. The sequence is that of Exodeoxyribonuclease 7 large subunit from Serratia proteamaculans (strain 568).